A 93-amino-acid chain; its full sequence is U12-lycotoxin-Ls1c (93 aa).

The N-terminal stretch at 1 to 18 (MKFAVILLFSLVVLAVAS) is a signal peptide. The propeptide occupies 19-38 (ESVEEVRREIDIEDLPEQQR).

It belongs to the neurotoxin 31 family. In terms of processing, contains 5 disulfide bonds. Expressed by the venom gland.

The protein localises to the secreted. The protein is U12-lycotoxin-Ls1c of Lycosa singoriensis (Wolf spider).